We begin with the raw amino-acid sequence, 218 residues long: NAD(P)H-hydrate epimerase (218 aa).

The YjeF N-terminal domain occupies 9–215 (MKKIDQYAID…DIGIPQKAIR (207 aa)). Residue 55 to 59 (NNGAD) coordinates (6S)-NADPHX. K(+) is bound by residues Asn-56 and Asp-127. (6S)-NADPHX-binding positions include 131–137 (GTGLNRT) and Asp-160. A K(+)-binding site is contributed by Ser-163.

It belongs to the NnrE/AIBP family. Requires K(+) as cofactor.

It catalyses the reaction (6R)-NADHX = (6S)-NADHX. The catalysed reaction is (6R)-NADPHX = (6S)-NADPHX. Catalyzes the epimerization of the S- and R-forms of NAD(P)HX, a damaged form of NAD(P)H that is a result of enzymatic or heat-dependent hydration. This is a prerequisite for the S-specific NAD(P)H-hydrate dehydratase to allow the repair of both epimers of NAD(P)HX. The chain is NAD(P)H-hydrate epimerase from Anaerococcus prevotii (strain ATCC 9321 / DSM 20548 / JCM 6508 / NCTC 11806 / PC1) (Peptostreptococcus prevotii).